A 413-amino-acid polypeptide reads, in one-letter code: Serine/threonine transporter SstT (413 aa).

9 consecutive transmembrane segments (helical) span residues 15 to 35 (NIVI…TLAP), 48 to 68 (FVSA…AASI), 82 to 102 (VIVL…VMSF), 141 to 161 (ALMT…GLGL), 178 to 198 (CISA…FGLV), 216 to 236 (LLAV…PLIV), 290 to 310 (IPLG…VLTL), 330 to 350 (LVAA…LLLI), and 357 to 377 (FGIS…IGVV).

The protein belongs to the dicarboxylate/amino acid:cation symporter (DAACS) (TC 2.A.23) family.

It localises to the cell inner membrane. It catalyses the reaction L-serine(in) + Na(+)(in) = L-serine(out) + Na(+)(out). The catalysed reaction is L-threonine(in) + Na(+)(in) = L-threonine(out) + Na(+)(out). Its function is as follows. Involved in the import of serine and threonine into the cell, with the concomitant import of sodium (symport system). This is Serine/threonine transporter SstT from Aliivibrio fischeri (strain ATCC 700601 / ES114) (Vibrio fischeri).